The primary structure comprises 1644 residues: Kinesin-like protein unc-104 (1644 aa).

The Kinesin motor domain occupies 3 to 351 (SVKVAVRVRP…LRYADRAKQI (349 aa)). 97–104 (GQTGAGKS) contacts ATP. Positions 358–436 (NEDANAKLIR…IAELNETWEE (79 aa)) form a coiled coil. The FHA domain occupies 499-565 (TRLGTSEANV…LQTGSRVILG (67 aa)). Positions 574–591 (HPEQAREKREKPKDKDVG) are enriched in basic and acidic residues. Residues 574-598 (HPEQAREKREKPKDKDVGENPGGNA) are disordered. Positions 631-672 (EQFKREKLAADQEFEEQRKTYEARIDALQKQVEEQSMTMSMY) form a coiled coil. 2 disordered regions span residues 953–985 (EQED…LQPG) and 1419–1440 (HMVI…TLPE). The segment covering 969-984 (ELHESNEHEPGEHLQP) has biased composition (basic and acidic residues). Positions 1428–1437 (TPVKDQQTPT) are enriched in polar residues. One can recognise a PH domain in the interval 1542–1640 (VVARKGYLNV…WLYAINPLLA (99 aa)).

Belongs to the TRAFAC class myosin-kinesin ATPase superfamily. Kinesin family. Unc-104 subfamily. In terms of assembly, monomer.

The protein localises to the cytoplasm. It is found in the cytoskeleton. Its function is as follows. Required for presynaptic maturation, has a role in axonal transport of dense-core vesicles carrying synaptic vesicle precursors, components required for the morphological transformation of axonal growth cones to mature boutons. The protein is Kinesin-like protein unc-104 of Aedes aegypti (Yellowfever mosquito).